Here is a 525-residue protein sequence, read N- to C-terminus: GMP synthase [glutamine-hydrolyzing] (525 aa).

A Glutamine amidotransferase type-1 domain is found at 9–207; that stretch reads RILILDFGSQ…VRDICQCEAL (199 aa). The active-site Nucleophile is the Cys-86. Residues His-181 and Glu-183 contribute to the active site. Residues 208-400 form the GMPS ATP-PPase domain; the sequence is WTPAKIIDDA…LGLPYDMLYR (193 aa). 235–241 contacts ATP; sequence SGGVDSS.

Homodimer.

It carries out the reaction XMP + L-glutamine + ATP + H2O = GMP + L-glutamate + AMP + diphosphate + 2 H(+). Its pathway is purine metabolism; GMP biosynthesis; GMP from XMP (L-Gln route): step 1/1. In terms of biological role, catalyzes the synthesis of GMP from XMP. The chain is GMP synthase [glutamine-hydrolyzing] from Shigella sonnei (strain Ss046).